Consider the following 422-residue polypeptide: NADH-quinone oxidoreductase subunit D 1 (422 aa).

Belongs to the complex I 49 kDa subunit family. NDH-1 is composed of 14 different subunits. Subunits NuoB, C, D, E, F, and G constitute the peripheral sector of the complex.

Its subcellular location is the cell membrane. The enzyme catalyses a quinone + NADH + 5 H(+)(in) = a quinol + NAD(+) + 4 H(+)(out). Functionally, NDH-1 shuttles electrons from NADH, via FMN and iron-sulfur (Fe-S) centers, to quinones in the respiratory chain. The immediate electron acceptor for the enzyme in this species is believed to be ubiquinone. Couples the redox reaction to proton translocation (for every two electrons transferred, four hydrogen ions are translocated across the cytoplasmic membrane), and thus conserves the redox energy in a proton gradient. The sequence is that of NADH-quinone oxidoreductase subunit D 1 from Herpetosiphon aurantiacus (strain ATCC 23779 / DSM 785 / 114-95).